A 509-amino-acid polypeptide reads, in one-letter code: BPI fold-containing family C protein (509 aa).

The signal sequence occupies residues methionine 1 to serine 23. N-linked (GlcNAc...) asparagine glycans are attached at residues asparagine 63, asparagine 79, asparagine 92, asparagine 113, and asparagine 117. A disulfide bridge connects residues cysteine 161 and cysteine 202. Asparagine 215, asparagine 227, asparagine 357, asparagine 374, and asparagine 457 each carry an N-linked (GlcNAc...) asparagine glycan.

This sequence belongs to the BPI/LBP/Plunc superfamily. BPI/LBP family.

It localises to the secreted. The protein is BPI fold-containing family C protein (Bpifc) of Mus musculus (Mouse).